Consider the following 459-residue polypeptide: Ribulose bisphosphate carboxylase large chain (459 aa).

Lys-4 bears the N6,N6,N6-trimethyllysine mark. Asn-113 and Thr-163 together coordinate substrate. Lys-165 (proton acceptor) is an active-site residue. Lys-167 contributes to the substrate binding site. 3 residues coordinate Mg(2+): Lys-191, Asp-193, and Glu-194. The residue at position 191 (Lys-191) is an N6-carboxylysine. The Proton acceptor role is filled by His-284. 3 residues coordinate substrate: Arg-285, His-317, and Ser-369.

Belongs to the RuBisCO large chain family. Type I subfamily. As to quaternary structure, heterohexadecamer of 8 large chains and 8 small chains; disulfide-linked. The disulfide link is formed within the large subunit homodimers. Requires Mg(2+) as cofactor. In terms of processing, the disulfide bond which can form in the large chain dimeric partners within the hexadecamer appears to be associated with oxidative stress and protein turnover.

It is found in the plastid. The protein localises to the chloroplast. It catalyses the reaction 2 (2R)-3-phosphoglycerate + 2 H(+) = D-ribulose 1,5-bisphosphate + CO2 + H2O. It carries out the reaction D-ribulose 1,5-bisphosphate + O2 = 2-phosphoglycolate + (2R)-3-phosphoglycerate + 2 H(+). In terms of biological role, ruBisCO catalyzes two reactions: the carboxylation of D-ribulose 1,5-bisphosphate, the primary event in carbon dioxide fixation, as well as the oxidative fragmentation of the pentose substrate in the photorespiration process. Both reactions occur simultaneously and in competition at the same active site. This chain is Ribulose bisphosphate carboxylase large chain, found in Heuchera micrantha (Alum root).